A 120-amino-acid polypeptide reads, in one-letter code: UPF0231 protein YacL (120 aa).

It belongs to the UPF0231 family.

This Salmonella paratyphi A (strain ATCC 9150 / SARB42) protein is UPF0231 protein YacL.